A 178-amino-acid chain; its full sequence is Interleukin-10 (178 aa).

Positions 1–18 (MHSSALLCYLVFLAGVGA) are cleaved as a signal peptide. Disulfide bonds link cysteine 30/cysteine 126 and cysteine 80/cysteine 132. A glycan (N-linked (GlcNAc...) asparagine) is linked at asparagine 67. The N-linked (GlcNAc...) asparagine glycan is linked to asparagine 134.

The protein belongs to the IL-10 family. In terms of assembly, homodimer. Interacts with IL10RA and IL10RB.

The protein resides in the secreted. Functionally, major immune regulatory cytokine that acts on many cells of the immune system where it has profound anti-inflammatory functions, limiting excessive tissue disruption caused by inflammation. Mechanistically, IL10 binds to its heterotetrameric receptor comprising IL10RA and IL10RB leading to JAK1 and STAT2-mediated phosphorylation of STAT3. In turn, STAT3 translocates to the nucleus where it drives expression of anti-inflammatory mediators. Targets antigen-presenting cells (APCs) such as macrophages and monocytes and inhibits their release of pro-inflammatory cytokines including granulocyte-macrophage colony-stimulating factor /GM-CSF, granulocyte colony-stimulating factor/G-CSF, IL-1 alpha, IL-1 beta, IL-6, IL-8 and TNF-alpha. Also interferes with antigen presentation by reducing the expression of MHC-class II and co-stimulatory molecules, thereby inhibiting their ability to induce T cell activation. In addition, controls the inflammatory response of macrophages by reprogramming essential metabolic pathways including mTOR signaling. This Equus caballus (Horse) protein is Interleukin-10 (IL10).